A 251-amino-acid chain; its full sequence is Large ribosomal subunit protein uL3 (251 aa).

Glutamine 151 is modified (N5-methylglutamine). The tract at residues glycine 221–glycine 251 is disordered. Residues alanine 225–glycine 251 show a composition bias toward low complexity.

This sequence belongs to the universal ribosomal protein uL3 family. In terms of assembly, part of the 50S ribosomal subunit. Forms a cluster with proteins L14 and L19. Post-translationally, methylated by PrmB.

In terms of biological role, one of the primary rRNA binding proteins, it binds directly near the 3'-end of the 23S rRNA, where it nucleates assembly of the 50S subunit. This chain is Large ribosomal subunit protein uL3, found in Novosphingobium aromaticivorans (strain ATCC 700278 / DSM 12444 / CCUG 56034 / CIP 105152 / NBRC 16084 / F199).